The following is a 448-amino-acid chain: Chromosomal replication initiator protein DnaA (448 aa).

The segment at 1 to 73 (MSTHLTETWE…VNALKLLTSK (73 aa)) is domain I, interacts with DnaA modulators. Positions 73–109 (KKYNIDFIVTTEEKIEENEKNHNNEKSNIVVNDEMST) are domain II. Residues 110-326 (MLNPKYTFDS…GALIRIVAFS (217 aa)) form a domain III, AAA+ region region. Residues glycine 154, glycine 156, lysine 157, and threonine 158 each coordinate ATP. A domain IV, binds dsDNA region spans residues 327-448 (SLTNKEISVD…NELNKRINQK (122 aa)).

This sequence belongs to the DnaA family. Oligomerizes as a right-handed, spiral filament on DNA at oriC.

It localises to the cytoplasm. Plays an essential role in the initiation and regulation of chromosomal replication. ATP-DnaA binds to the origin of replication (oriC) to initiate formation of the DNA replication initiation complex once per cell cycle. Binds the DnaA box (a 9 base pair repeat at the origin) and separates the double-stranded (ds)DNA. Forms a right-handed helical filament on oriC DNA; dsDNA binds to the exterior of the filament while single-stranded (ss)DNA is stabiized in the filament's interior. The ATP-DnaA-oriC complex binds and stabilizes one strand of the AT-rich DNA unwinding element (DUE), permitting loading of DNA polymerase. After initiation quickly degrades to an ADP-DnaA complex that is not apt for DNA replication. Binds acidic phospholipids. This is Chromosomal replication initiator protein DnaA from Clostridium botulinum (strain 657 / Type Ba4).